The sequence spans 360 residues: MGLLLLVPLLLLPGSYGLPFYNGFYYSNSANDQNLGNGHGKDLLNGVKLVVETPEETLFTYQGASVILPCRYRYEPALVSPRRVRVKWWKLSENGAPEKDVLVAIGLRHRSFGDYQGRVHLRQDKEHDVSLEIQDLRLEDYGRYRCEVIDGLEDESGLVELELRGVVFPYQSPNGRYQFNFHEGQQVCAEQAAVVASFEQLFRAWEEGLDWCNAGWLQDATVQYPIMLPRQPCGGPGLAPGVRSYGPRHRRLHRYDVFCFATALKGRVYYLEHPEKLTLTEAREACQEDDATIAKVGQLFAAWKFHGLDRCDAGWLADGSVRYPVVHPHPNCGPPEPGVRSFGFPDPQSRLYGVYCYRQH.

An N-terminal signal peptide occupies residues 1–17 (MGLLLLVPLLLLPGSYG). In terms of domain architecture, Ig-like V-type spans 48-164 (KLVVETPEET…ESGLVELELR (117 aa)). Cystine bridges form between C70-C146, C188-C259, C212-C233, C286-C356, and C311-C332. 2 Link domains span residues 166-261 (VVFP…FCFA) and 266-358 (GRVY…YCYR).

The protein belongs to the HAPLN family. As to expression, widely expressed with highest levels in spleen and placenta.

Its subcellular location is the secreted. The protein localises to the extracellular space. It localises to the extracellular matrix. Functionally, may function in hyaluronic acid binding. The polypeptide is Hyaluronan and proteoglycan link protein 3 (HAPLN3) (Homo sapiens (Human)).